We begin with the raw amino-acid sequence, 1239 residues long: Anillin (1239 aa).

Disordered regions lie at residues 32-67 (CSVP…SGGG), 230-265 (EAPP…RTKQ), 493-621 (FDNQ…MCNG), and 684-716 (GSTQ…NSFS). Positions 53-63 (RSRSPGGQSAA) are enriched in low complexity. The tract at residues 126–371 (EQAEGGALNP…ENKGTGGQSQ (246 aa)) is interaction with and bundling of F-actin. Residues 252–265 (PKKDEVDEASRTKQ) show a composition bias toward basic and acidic residues. Residues 500 to 518 (SSVAAQARPPAPAPSRVVR) show a composition bias toward low complexity. Pro residues predominate over residues 519–528 (PMPPPPPPPI). A compositionally biased stretch (basic and acidic residues) spans 551-563 (EDSKRARKSHSDR). Residues 594-610 (DEEETESCMDESDDQSQ) show a composition bias toward acidic residues. Polar residues predominate over residues 699–716 (ASRLSLGSKGTTASNSFS). Phosphoserine is present on Ser-712. Thr-740 is subject to Phosphothreonine. 2 positions are modified to phosphoserine: Ser-744 and Ser-754. The residue at position 831 (Thr-831) is a Phosphothreonine. Positions 834–861 (DDEEMQNAREVNDASQAQDKIKKLLSEV) form a coiled coil. Residues 1106-1230 (SVEYKGFLTM…WCAYLNKALT (125 aa)) enclose the PH domain.

Interacts with and bundles F-actin. As to expression, accumulates in the ring canals that interconnect cells of the germline cysts in males and the ovarian follicles in females. These structures develop from arrested contractile rings after a specialized cytokinesis in which the closing of the invaginating plasma membrane is incomplete. Also concentrates in the arrested cleavage furrows that initially link the oocyte to its 15 nurse cells in the early egg chamber and is subsequently lost from these furrows as germline cell division is completed.

It localises to the nucleus. It is found in the cytoplasm. The protein resides in the cytoskeleton. Its subcellular location is the cell cortex. The protein localises to the cell projection. It localises to the cilium. It is found in the flagellum. In terms of biological role, required for cytokinesis. Essential for the structural integrity of the cleavage furrow and for completion of cleavage furrow ingression and proper formation of the midbody. Required during cellularization of syncytial embryos for the proper formation and function of the furrow canals, the stable inward folds of the plasma membrane which separate the peripheral nuclei. Also required for the formation of the pole cells, the progenitors of the adult germline which are formed by cytokinesis of the cytoplasmic buds at the posterior pole of the syncytial embryo. Essential for embryonic viability. The protein is Anillin (scra) of Drosophila melanogaster (Fruit fly).